A 51-amino-acid polypeptide reads, in one-letter code: Ovomucoid (51 aa).

The Kazal-like domain occupies 1–49; it reads VDCSEYPQPACTTERRPVCGSNNKTYSNKCNFCNAVVKSNGTLTVSHFG. Cystine bridges form between cysteine 3/cysteine 33, cysteine 11/cysteine 30, and cysteine 19/cysteine 51. A glycan (N-linked (GlcNAc...) asparagine) is linked at asparagine 40.

Its subcellular location is the secreted. The sequence is that of Ovomucoid from Polyplectron napoleonis (Palawan peacock-pheasant).